The sequence spans 1004 residues: Unconventional myosin-Id (1004 aa).

The region spanning 9-695 (FGKADFVLLD…TIFSLEEQRA (687 aa)) is the Myosin motor domain. 102–109 (GESGAGKT) is an ATP binding site. Residues 572–594 (MISLVEKLASKEPYYVRCIKPND) form an actin-binding region. 2 consecutive IQ domains span residues 699–719 (KRIVLFLQKVWRGTLARMRYR) and 721–741 (MRAALIIIRAYRRYKVKSYIR). The TH1 domain maps to 812 to 1003 (GQRADLGLQR…RSGYILSVPG (192 aa)).

This sequence belongs to the TRAFAC class myosin-kinesin ATPase superfamily. Myosin family. Interacts (via the two IQ motifs) with calmodulin. Interacts with F-actin.

Its subcellular location is the cytoplasm. The protein localises to the perikaryon. It localises to the cell projection. It is found in the dendrite. The protein resides in the early endosome. Its subcellular location is the cell cortex. Functionally, unconventional myosin that functions as actin-based motor protein with ATPase activity. Plays a role in the formation of Kupffer's vesicle, an organ that functions as a left-right organizer during embryogenesis. Plays a role in vesicular trafficking events that are required for normal lumen expansion of Kupffer's vesicle. Required for normal orientation of cilia in Kupffer's vesicle, and thus for normal, unidirectional circular flow and normal angular flow velocity, which then mediates asymmetric gene expression and left-right asymmetric development. Plays a role in endosomal protein trafficking, and especially in the transfer of cargo proteins from early to recycling endosomes. Required for normal planar cell polarity in ciliated cells, for normal rotational polarity of cilia, and for coordinated, unidirectional ciliary movement. In Danio rerio (Zebrafish), this protein is Unconventional myosin-Id (myo1d).